Consider the following 493-residue polypeptide: Ribulose bisphosphate carboxylase large chain (493 aa).

Substrate is bound at residue asparagine 132. Position 181 is an S-nitrosocysteine (cysteine 181). Threonine 182 contributes to the substrate binding site. The active-site Proton acceptor is the lysine 184. Lysine 186 is a substrate binding site. Residues lysine 210, aspartate 212, and glutamate 213 each coordinate Mg(2+). The residue at position 210 (lysine 210) is an N6-carboxylysine. Histidine 302 functions as the Proton acceptor in the catalytic mechanism. The substrate site is built by arginine 303, histidine 335, and serine 387. Residue cysteine 460 is modified to S-nitrosocysteine.

This sequence belongs to the RuBisCO large chain family. Type I subfamily. As to quaternary structure, heterohexadecamer of 8 large chains and 8 small chains. Mg(2+) serves as cofactor.

The protein resides in the plastid. It localises to the chloroplast. The catalysed reaction is 2 (2R)-3-phosphoglycerate + 2 H(+) = D-ribulose 1,5-bisphosphate + CO2 + H2O. It carries out the reaction D-ribulose 1,5-bisphosphate + O2 = 2-phosphoglycolate + (2R)-3-phosphoglycerate + 2 H(+). Its function is as follows. RuBisCO catalyzes two reactions: the carboxylation of D-ribulose 1,5-bisphosphate, the primary event in carbon dioxide fixation, as well as the oxidative fragmentation of the pentose substrate in the photorespiration process. Both reactions occur simultaneously and in competition at the same active site. Carbon dioxide and oxygen bind in the same pocket of the enzyme in a similar manner. The chain is Ribulose bisphosphate carboxylase large chain from Galdieria sulphuraria (Red alga).